Consider the following 316-residue polypeptide: tRNA dimethylallyltransferase (316 aa).

Position 17–24 (17–24) interacts with ATP; that stretch reads GPTASGKT. 19 to 24 provides a ligand contact to substrate; it reads TASGKT. Interaction with substrate tRNA regions lie at residues 42–45, 166–170, 247–252, and 280–287; these read DSAL, QRLSR, RCVGYR, and KRQITWLR.

It belongs to the IPP transferase family. In terms of assembly, monomer. Requires Mg(2+) as cofactor.

The catalysed reaction is adenosine(37) in tRNA + dimethylallyl diphosphate = N(6)-dimethylallyladenosine(37) in tRNA + diphosphate. Functionally, catalyzes the transfer of a dimethylallyl group onto the adenine at position 37 in tRNAs that read codons beginning with uridine, leading to the formation of N6-(dimethylallyl)adenosine (i(6)A). In Shigella flexneri serotype 5b (strain 8401), this protein is tRNA dimethylallyltransferase.